The sequence spans 249 residues: Molybdate/tungstate transport system permease protein WtpB (249 aa).

Residues 1–5 (MEKFD) are Cytoplasmic-facing. A helical transmembrane segment spans residues 6-26 (IAMTVFLVMIFLFIFLPIIYM). Topologically, residues 27–48 (LSNPGDLNQLLDKEVIEAFKTT) are extracellular. In terms of domain architecture, ABC transmembrane type-1 spans 45–240 (FKTTLLAGAV…LISIALFALL (196 aa)). Residues 49–69 (LLAGAVATLIALIFGIPTGYI) form a helical membrane-spanning segment. The Cytoplasmic portion of the chain corresponds to 70-93 (LARYDFKFKSFVEAVLDLPMAIPH). Residues 94-114 (SVIGIIILSFIYGIDIINFIG) traverse the membrane as a helical segment. Residues 115-116 (RY) lie on the Extracellular side of the membrane. A helical membrane pass occupies residues 117-137 (VVDNFWGIVTVYLFVGIPFMV). Residues 138-177 (NSIRDGFLSVDEEIEYVSRTLGASKIRTFFEISLPLIKNN) lie on the Cytoplasmic side of the membrane. A helical membrane pass occupies residues 178–198 (IISGIILSFARGISEVGAILI). The Extracellular segment spans residues 199–223 (IAYYPKTVPILIYERFMSFGLDASK). The chain crosses the membrane as a helical span at residues 224–244 (PISVGMILISIALFALLRMFG). At 245–249 (RMRGR) the chain is on the cytoplasmic side.

Belongs to the binding-protein-dependent transport system permease family. The complex is composed of two ATP-binding proteins (WtpC), two transmembrane proteins (WtpB) and a solute-binding protein (WtpA).

It is found in the cell membrane. Part of the ABC transporter complex WtpABC involved in molybdate/tungstate import. Probably responsible for the translocation of the substrate across the membrane. This Methanocaldococcus jannaschii (strain ATCC 43067 / DSM 2661 / JAL-1 / JCM 10045 / NBRC 100440) (Methanococcus jannaschii) protein is Molybdate/tungstate transport system permease protein WtpB (wtpB).